Consider the following 1686-residue polypeptide: Thrombospondin type-1 domain-containing protein 7A (1686 aa).

An N-terminal signal peptide occupies residues 1–36 (MGLASRAPGKGGTSAGALASLFRVALLFFGLWDVQT). Topologically, residues 37–1635 (QTVANTRPTY…FGPDGKLKTW (1599 aa)) are extracellular. 3 consecutive TSP type-1 domains span residues 44 to 103 (PTYI…RVCD), 107 to 181 (ELYD…IPCP), and 183 to 236 (DCVV…GKCE). N223 carries an N-linked (GlcNAc...) asparagine glycan. The segment at 257-321 (IRQARDTGEA…EKKRMRDPET (65 aa)) is disordered. Composition is skewed to basic and acidic residues over residues 259-272 (QARD…PKAE) and 294-321 (EKKE…DPET). TSP type-1 domains are found at residues 385–441 (DCEV…SPQG), 448–535 (VVYN…IPCP), 537–596 (ECEV…PSCY), 656–717 (DCVL…HPCT), 718–797 (VYHW…LPCK), 799–859 (DCVV…SVCP), 860–932 (GYRW…LPCQ), 934–985 (DCQL…QYCP), 988–1061 (KYNA…IPCP), 1063–1123 (DCKL…SDCS), 1124–1191 (QYVW…LPCP), 1193–1247 (DCVL…SNCF), 1248–1311 (HYSY…VECP), 1313–1368 (NCQL…KPCF), 1369–1439 (SWRY…VPCP), and 1441–1502 (ECYL…GQCY). Disulfide bonds link C460–C530, C480–C534, and C491–C519. N-linked (GlcNAc...) asparagine glycosylation is present at N475. N525 carries an N-linked (GlcNAc...) asparagine glycan. Cystine bridges form between C657/C699 and C668/C672. N-linked (GlcNAc...) asparagine glycosylation occurs at N701. 7 disulfide bridges follow: C711–C716, C729–C792, C756–C796, C767–C780, C800–C842, C811–C815, and C852–C858. N739 is a glycosylation site (N-linked (GlcNAc...) asparagine). An N-linked (GlcNAc...) asparagine glycan is attached at N996. Cystine bridges form between C1000–C1056, C1022–C1060, C1033–C1046, C1064–C1101, C1075–C1079, and C1118–C1122. Residue N1071 is glycosylated (N-linked (GlcNAc...) asparagine). N1212 carries N-linked (GlcNAc...) asparagine glycosylation. The cysteines at positions 1240 and 1246 are disulfide-linked. An N-linked (GlcNAc...) asparagine glycan is attached at N1252. Cystine bridges form between C1259–C1306, C1267–C1310, C1278–C1291, C1314–C1352, C1325–C1329, C1362–C1367, C1378–C1434, C1385–C1438, C1396–C1415, C1442–C1486, C1453–C1457, and C1496–C1501. A glycan (N-linked (GlcNAc...) asparagine) is linked at N1303. Residue N1393 is glycosylated (N-linked (GlcNAc...) asparagine). A glycan (N-linked (GlcNAc...) asparagine) is linked at N1527. The helical transmembrane segment at 1636 to 1656 (VYGVAAGAFVLLVFIVSMTYL) threads the bilayer. Residues 1657-1686 (ACKKPKKPQRRQMNNRLKPLTLAYDGDADM) lie on the Cytoplasmic side of the membrane.

In terms of processing, extensively N-glycosylated.

The protein resides in the cell membrane. It localises to the cell projection. Functionally, required for normal sprouting angiogenesis and normal embryonic development of intersegmental vessels (ISV). Required for normal function of the glomerular filtration barrier. Required for normal axon outgrowth on embryonic motor neurons at the level of the horizontal myoseptum. Required for normal expression of notch1b, suggesting that its functions in angiogenesis and neuron outgrowth are due to decreased expression of notch1b. Plays a role in actin cytoskeleton rearrangement. In Danio rerio (Zebrafish), this protein is Thrombospondin type-1 domain-containing protein 7A.